We begin with the raw amino-acid sequence, 512 residues long: Glycosyltransferase sdnJ (512 aa).

Positions 1–24 (MHAKRPSVLFFTISDFGYVNVVLA) are cleaved as a signal peptide. An N-linked (GlcNAc...) asparagine glycan is attached at N207.

It belongs to the UDP-glycosyltransferase family.

The enzyme catalyses sordaricin + GDP-6-deoxy-alpha-D-altrose = 4'-O-demethylsordarin + GDP + H(+). The protein operates within antibiotic biosynthesis. In terms of biological role, glycosyltransferase; part of the gene cluster that mediates the biosynthesis of sordarin and hypoxysordarin, glycoside antibiotics with a unique tetracyclic diterpene aglycone structure. First, the geranylgeranyl diphosphate synthase sdnC constructs GGDP from farnesyl diphosphate and isopentenyl diphosphate. The diterpene cyclase sdnA then catalyzes the cyclization of GGDP to afford cycloaraneosene. Cycloaraneosene is then hydroxylated four times by the putative cytochrome P450 monooxygenases sdnB, sdnE, sdnF and sdnH to give a hydroxylated cycloaraneosene derivative such as cycloaraneosene-8,9,13,19-tetraol. Although the order of the hydroxylations is unclear, at least C8, C9 and C13 of the cycloaraneosene skeleton are hydroxylated before the sordaricin formation. Dehydration of the 13-hydroxy group of the hydroxylated cycloaraneosene derivative might be catalyzed by an unassigned hypothetical protein such as sdnG and sdnP to construct the cyclopentadiene moiety. The FAD-dependent oxidoreductase sdnN is proposed to catalyze the oxidation at C9 of the hydroxylated cycloaraneosene derivative and also catalyze the Baeyer-Villiger oxidation to give the lactone intermediate. The presumed lactone intermediate would be hydrolyzed to give an acrolein moiety and a carboxylate moiety. Then, [4+2]cycloaddition would occur between the acrolein moiety and the cyclopentadiene moiety to give sordaricin. SdnN might also be involved in the [4+2]cycloaddition after the hypothesized oxidation to accommodate the oxidized product and prompt the [4+2]cycloaddition. GDP-6-deoxy-D-altrose may be biosynthesized from GDP-D-mannose by the putative GDP-mannose-4,6-dehydratase sdnI and the short-chain dehydrogenase sdnK. The glycosyltransferase sdnJ catalyzes the attachment of 6-deoxy-D-altrose onto the 19-hydroxy group of sordaricin to give 4'-O-demethylsordarin. The methyltransferase sdnD would complete the biosynthesis of sordarin. Sordarin can be further modified into hypoxysordarin. The unique acyl chain at the 3'-hydroxy group of hypoxysordarin would be constructed by an iterative type I PKS sdnO and the trans-acting polyketide methyltransferase sdnL. SdnL would be responsible for the introduction of an alpha-methyl group of the polyketide chain. Alternatively, the beta-lactamase-like protein sdnR might be responsible for the cleavage and transfer of the polyketide chain from the PKS sdnO to sordarin. Two putative cytochrome P450 monooxygenases, sdnQ and sdnT, might catalyze the epoxidations of the polyketide chain to complete the biosynthesis of hypoxysordarin. Transcriptional regulators sdnM and sdnS are presumably encoded for the transcriptional regulation of the expression of the sdn gene cluster. The sequence is that of Glycosyltransferase sdnJ from Sordaria araneosa (Pleurage araneosa).